Consider the following 570-residue polypeptide: Proline--tRNA ligase (570 aa).

It belongs to the class-II aminoacyl-tRNA synthetase family. ProS type 1 subfamily. Homodimer.

The protein resides in the cytoplasm. The catalysed reaction is tRNA(Pro) + L-proline + ATP = L-prolyl-tRNA(Pro) + AMP + diphosphate. Its function is as follows. Catalyzes the attachment of proline to tRNA(Pro) in a two-step reaction: proline is first activated by ATP to form Pro-AMP and then transferred to the acceptor end of tRNA(Pro). As ProRS can inadvertently accommodate and process non-cognate amino acids such as alanine and cysteine, to avoid such errors it has two additional distinct editing activities against alanine. One activity is designated as 'pretransfer' editing and involves the tRNA(Pro)-independent hydrolysis of activated Ala-AMP. The other activity is designated 'posttransfer' editing and involves deacylation of mischarged Ala-tRNA(Pro). The misacylated Cys-tRNA(Pro) is not edited by ProRS. The sequence is that of Proline--tRNA ligase (proS) from Aquifex aeolicus (strain VF5).